Reading from the N-terminus, the 512-residue chain is Opioid growth factor receptor-like protein 1 (512 aa).

Disordered stretches follow at residues 1-72 (MGNI…ETGT), 323-469 (IWGP…TCCK), and 488-512 (SLSPGTSNSNVTELKVEGSETGPFT). Acidic residues-rich tracts occupy residues 28 to 54 (GGEEEQQEAEEEEESEGTEQREDDNEE) and 62 to 71 (TNEGGEEETG). The span at 328-337 (DKQKADENKA) shows a compositional bias: basic and acidic residues. Over residues 347–361 (QKKHSHVEKKSRPAK) the composition is skewed to basic residues. Residues 408–421 (TVTSENNSSKTGQT) show a composition bias toward polar residues. Residues 449-468 (RSLDTEHDLKRPEADRETCC) show a composition bias toward basic and acidic residues. A compositionally biased stretch (polar residues) spans 490–499 (SPGTSNSNVT).

The protein belongs to the opioid growth factor receptor family.

This Xenopus tropicalis (Western clawed frog) protein is Opioid growth factor receptor-like protein 1 (ogfrl1).